A 273-amino-acid chain; its full sequence is MKILRWLFALVMLIATTEAMAAGHSVDVYYGYNGDSRNIATFNLKIMMPSAVYVGEYKSSQWLMTGEILQNVSWSGPPPAPSVKLIGYHQNINKASCPGLPSGWNCGYYTFEVIVSAEIESYFSCPWLVIMNDSEASPGGVTYQGPDSHDTICPSVSVQPYDVSWNENYVSKSKLLTLQSTGGVVEKTLSTYLMKDGKLCDSTQMNETGGYCRWVAQMITFTASGCDKAEVSVTPNRHPITDKQLHDMVVRVDTSSMQPIDSTCRFQYILNEL.

Positions 1–21 (MKILRWLFALVMLIATTEAMA) are cleaved as a signal peptide.

The protein to S.typhimurium YadU.

Functionally, part of the yfcOPQRSUV fimbrial operon. Could contribute to adhesion to various surfaces in specific environmental niches. Increases adhesion to eukaryotic T24 bladder epithelial cells in the absence of fim genes. This is an uncharacterized protein from Escherichia coli (strain K12).